Consider the following 515-residue polypeptide: Maturase K (515 aa).

The protein belongs to the intron maturase 2 family. MatK subfamily.

The protein resides in the plastid. Its subcellular location is the chloroplast. Usually encoded in the trnK tRNA gene intron. Probably assists in splicing its own and other chloroplast group II introns. This chain is Maturase K, found in Pinus coulteri (Coulter pine).